We begin with the raw amino-acid sequence, 143 residues long: Transcriptional regulator MraZ (143 aa).

2 consecutive SpoVT-AbrB domains span residues 5–47 (EYQH…SLEE) and 76–119 (AAEV…DKSK).

The protein belongs to the MraZ family. In terms of assembly, forms oligomers.

The protein resides in the cytoplasm. The protein localises to the nucleoid. The protein is Transcriptional regulator MraZ of Acetivibrio thermocellus (strain ATCC 27405 / DSM 1237 / JCM 9322 / NBRC 103400 / NCIMB 10682 / NRRL B-4536 / VPI 7372) (Clostridium thermocellum).